A 418-amino-acid chain; its full sequence is Vasopressin V1a receptor (418 aa).

A disordered region spans residues 1-43; that stretch reads MRLSAGPDAGPSGNSSPWWPLATGAGNTSREAEALGEGNGPPR. Over 1–52 the chain is Extracellular; the sequence is MRLSAGPDAGPSGNSSPWWPLATGAGNTSREAEALGEGNGPPRDVRNEELAK. N27 carries an N-linked (GlcNAc...) asparagine glycan. Residues 53 to 76 traverse the membrane as a helical segment; sequence LEIAVLAVTFAVAVLGNSSVLLAL. Residues 77 to 88 lie on the Cytoplasmic side of the membrane; it reads HRTPRKTSRMHL. Residues 89–110 traverse the membrane as a helical segment; the sequence is FIRHLSLADLAVAFFQVLPQMC. Topologically, residues 111 to 125 are extracellular; the sequence is WDITYRFRGPDWLCR. A disulfide bridge connects residues C124 and C203. Residues 126–147 form a helical membrane-spanning segment; the sequence is VVKHLQVFGMFASAYMLVVMTA. Topologically, residues 148 to 168 are cytoplasmic; sequence DRYIAVCHPLKTLQQPARRSR. The helical transmembrane segment at 169–190 threads the bilayer; sequence LMIAAAWVLSFVLSTPQYFVFS. Over 191–218 the chain is Extracellular; it reads MIEVNNVTKARDCWATFIQPWGSRAYVT. N196 carries N-linked (GlcNAc...) asparagine glycosylation. The helical transmembrane segment at 219–239 threads the bilayer; sequence WMTGGIFVAPVVILGTCYGFI. Over 240–293 the chain is Cytoplasmic; the sequence is CYNIWCNVRGKTASRQSKGAEQAGVAFQKGFLLAPCVSSVKSISRAKIRTVKMT. A helical transmembrane segment spans residues 294–313; sequence FVIVTAYIVCWAPFFIIQMW. Residues 314-331 are Extracellular-facing; it reads SVWDPMSVWTESENPTIT. Residues 332-351 form a helical membrane-spanning segment; the sequence is ITALLGSLNSCCNPWIYMFF. Topologically, residues 352–418 are cytoplasmic; the sequence is SGHLLQDCVQ…KSIKFIPVST (67 aa). S-palmitoyl cysteine attachment occurs at residues C365 and C366. The segment at 377–410 is disordered; the sequence is DTDSMSRRQTFYSNNRSPTNSTGMWKDSPKSSKS. Residues 383–399 are compositionally biased toward polar residues; it reads RRQTFYSNNRSPTNSTG. A Phosphoserine modification is found at S404.

This sequence belongs to the G-protein coupled receptor 1 family. Vasopressin/oxytocin receptor subfamily.

Its subcellular location is the cell membrane. Functionally, receptor for arginine vasopressin. The activity of this receptor is mediated by G proteins which activate a phosphatidyl-inositol-calcium second messenger system. Has been involved in social behaviors, including affiliation and attachment. This is Vasopressin V1a receptor (AVPR1A) from Homo sapiens (Human).